A 496-amino-acid chain; its full sequence is 2,3-bisphosphoglycerate-independent phosphoglycerate mutase (496 aa).

Positions 12 and 62 each coordinate Mn(2+). Residue S62 is the Phosphoserine intermediate of the active site. Substrate is bound by residues H121, 150–151 (RD), R181, R187, 252–255 (RNDR), and K317. Mn(2+) is bound by residues D384, H388, D425, H426, and H444.

This sequence belongs to the BPG-independent phosphoglycerate mutase family. As to quaternary structure, monomer. Mn(2+) is required as a cofactor.

The catalysed reaction is (2R)-2-phosphoglycerate = (2R)-3-phosphoglycerate. The protein operates within carbohydrate degradation; glycolysis; pyruvate from D-glyceraldehyde 3-phosphate: step 3/5. Functionally, catalyzes the interconversion of 2-phosphoglycerate and 3-phosphoglycerate. The chain is 2,3-bisphosphoglycerate-independent phosphoglycerate mutase from Anaplasma phagocytophilum (strain HZ).